A 188-amino-acid polypeptide reads, in one-letter code: HGPRTase-like protein 1 (188 aa).

It belongs to the purine/pyrimidine phosphoribosyltransferase family. Archaeal HPRT subfamily.

Its function is as follows. May catalyze a purine salvage reaction, the substrate is unknown. In Haloquadratum walsbyi (strain DSM 16854 / JCM 12705 / C23), this protein is HGPRTase-like protein 1.